Consider the following 356-residue polypeptide: DNA polymerase IV (356 aa).

Residues 7–188 enclose the UmuC domain; that stretch reads IIHIDMDAFY…IPVTKFYGVG (182 aa). Residues Asp11 and Asp106 each contribute to the Mg(2+) site. Glu107 is an active-site residue.

Belongs to the DNA polymerase type-Y family. As to quaternary structure, monomer. Mg(2+) serves as cofactor.

Its subcellular location is the cytoplasm. The catalysed reaction is DNA(n) + a 2'-deoxyribonucleoside 5'-triphosphate = DNA(n+1) + diphosphate. In terms of biological role, poorly processive, error-prone DNA polymerase involved in untargeted mutagenesis. Copies undamaged DNA at stalled replication forks, which arise in vivo from mismatched or misaligned primer ends. These misaligned primers can be extended by PolIV. Exhibits no 3'-5' exonuclease (proofreading) activity. May be involved in translesional synthesis, in conjunction with the beta clamp from PolIII. The sequence is that of DNA polymerase IV from Listeria monocytogenes serotype 4b (strain CLIP80459).